The following is a 154-amino-acid chain: Large ribosomal subunit protein uL13 (154 aa).

Belongs to the universal ribosomal protein uL13 family. In terms of assembly, part of the 50S ribosomal subunit.

This protein is one of the early assembly proteins of the 50S ribosomal subunit, although it is not seen to bind rRNA by itself. It is important during the early stages of 50S assembly. The protein is Large ribosomal subunit protein uL13 of Rhodopseudomonas palustris (strain BisB5).